A 621-amino-acid polypeptide reads, in one-letter code: MRVLKYMLLYILYLKSIVKILRRLNNMAGSNIIIGIDLGTTNSCVAVMENGKSKILETPEGKRTIPSVVAFKDNEIIVGDVAKRQMVTNKNTISSIKRLMGTDKTVEVNGKKYTPEQISAQILSYIKKCAEEKLGQTITKAVITVPAYFNDAERNATKNAGKIAGLEVERIINEPTAAALAYGMDKSKTEHKVLVYDLGGGTFDVSILEIADGTFEVLSTSGDNHLGGDDWDQKIINWIVEEVKKNDKVDLSNDKMAMQRLKDAAEKAKIDLSGLKEVEISLPFIAMTESGPLNVDLKLTRAKFEDLTRDLLERTIKPVEDALKEAKLSASDIHKVLLVGGSTRMPAVEELVKSKLGKSPDKNINPDEVVAAGAAIQGGVLMGDVKDILLLDVTPLTLSIETMGGVSTPLIKRNSTIPISKSQIFSTAADNQPAVDVHVLQGERQMAADNKSLGRFILDGIEPAPRGVPQIEITFNIDANGILNVKAVDKKTNKEATITIKDSSGLSQEEIDKMIKEAEENKEKDAQLKEQQEIRYKAESLINMFKTSLNGEEGKKVDAKQKEEAEKMINEFETLLKEEKWDELKTKINQFEAMASQFAQAAKQNEEKKEEDKKDSEESKN.

Residue threonine 202 is modified to Phosphothreonine; by autocatalysis. Residues 596–621 (SQFAQAAKQNEEKKEEDKKDSEESKN) form a disordered region. Basic and acidic residues predominate over residues 604–621 (QNEEKKEEDKKDSEESKN).

The protein belongs to the heat shock protein 70 family.

Functionally, acts as a chaperone. The protein is Chaperone protein DnaK of Malacoplasma penetrans (strain HF-2) (Mycoplasma penetrans).